A 156-amino-acid polypeptide reads, in one-letter code: Small ribosomal subunit protein uS7 (156 aa).

Belongs to the universal ribosomal protein uS7 family. Part of the 30S ribosomal subunit. Contacts proteins S9 and S11.

In terms of biological role, one of the primary rRNA binding proteins, it binds directly to 16S rRNA where it nucleates assembly of the head domain of the 30S subunit. Is located at the subunit interface close to the decoding center, probably blocks exit of the E-site tRNA. In Prochlorococcus marinus (strain MIT 9312), this protein is Small ribosomal subunit protein uS7.